The sequence spans 642 residues: Fimbrin (642 aa).

2 EF-hand domains span residues 16 to 50 (EDLF…KDGD) and 51 to 86 (ATYD…LRES). Ca(2+)-binding residues include D29, D31, W35, D66, S68, R70, and D75. Actin-binding stretches follow at residues 125–394 (IVAG…GLEP) and 395–642 (IQEE…TLNK). Calponin-homology (CH) domains lie at 139–259 (EEER…RRGL), 287–390 (LPPE…NTHP), 411–521 (EREA…RRNI), and 534–642 (DMSD…TLNK).

Functionally, binds to actin, and functionally associates with actin structures involved in the development and maintenance of cell polarity. The sequence is that of Fimbrin (SAC6) from Saccharomyces cerevisiae (strain ATCC 204508 / S288c) (Baker's yeast).